The sequence spans 434 residues: MLVHAYSAMDRSEVLNGAASGGRLSQLSSLNQGPYSSAPPLCHTPASDFQPPYFPPPYPQPPLSYSQSQESGYPHLGDPYSSINSIHHQHQQPSWHTPRSRPEEAGLLSQTHRGLSLDPRRDYGGMSRLIPGLTDGGHSLADSSLSIHALSHHSLEDMQLLDESGISILDQSVIKKVPISSKNNSSMMSALSMNKESLIGGVSNPNEVFCSVPGRLSLLSSTSKYKVTVGEVQRRLSPPECLNASLLGGVLRRAKSKNGGRCLRERLEKIGLNLPAGRRKAANVTLLTSLVEGEAVHLARDFGYVCETEFPAKAAAEYLCRQHSDPTELHARKNMLLATKQICKEFADLLAQDRSPLGNSRPSLILEPGVQSCLTHFSLITHGFGGPAICAALTAFQNYLLESLKGMDKIFMSSTGNGHSAAESKSEKDIKHRK.

Residues 30 to 123 (LNQGPYSSAP…GLSLDPRRDY (94 aa)) are disordered. Over residues 52 to 62 (PYFPPPYPQPP) the composition is skewed to pro residues. The short motif at 53–58 (YFPPPY) is the PPxY motif element. A compositionally biased stretch (polar residues) spans 81–97 (SSINSIHHQHQQPSWHT). The segment at 278–408 (RRKAANVTLL…YLLESLKGMD (131 aa)) is H-S-H (helix-span-helix), dimerization. Residues 415–434 (TGNGHSAAESKSEKDIKHRK) form a disordered region. Residues 422–434 (AESKSEKDIKHRK) show a composition bias toward basic and acidic residues.

The protein belongs to the AP-2 family. Binds DNA as a dimer. Can form homodimers or heterodimers with other AP-2 family members.

The protein resides in the nucleus. Its function is as follows. Sequence-specific DNA-binding protein that interacts with inducible viral and cellular enhancer elements to regulate transcription of selected genes. AP-2 factors bind to the consensus sequence 5'-GCCNNNGGC-3' and activate genes involved in a large spectrum of important biological functions. This chain is Transcription factor AP-2-epsilon, found in Xenopus laevis (African clawed frog).